Reading from the N-terminus, the 193-residue chain is Protein TEX261 (193 aa).

Helical transmembrane passes span 1–21 (MVGVTLANVLPVCLALLPPPA), 39–59 (SRIIKYMIWFSTAVLIGLYVF), 67–87 (IGVGLFTNLVYFGLLQTFPFI), 94–114 (FILSCGLVVVNHYLAFQFFAE), and 122–142 (VLAYFTFCLWIIPFAFFVSLS).

It belongs to the SVP26 family.

The protein localises to the membrane. The sequence is that of Protein TEX261 (TEX261) from Bos taurus (Bovine).